The sequence spans 156 residues: Small ribosomal subunit protein uS7 (156 aa).

Belongs to the universal ribosomal protein uS7 family. In terms of assembly, part of the 30S ribosomal subunit. Contacts proteins S9 and S11.

Its function is as follows. One of the primary rRNA binding proteins, it binds directly to 16S rRNA where it nucleates assembly of the head domain of the 30S subunit. Is located at the subunit interface close to the decoding center, probably blocks exit of the E-site tRNA. This is Small ribosomal subunit protein uS7 from Roseobacter denitrificans (strain ATCC 33942 / OCh 114) (Erythrobacter sp. (strain OCh 114)).